Here is a 156-residue protein sequence, read N- to C-terminus: Small ribosomal subunit protein uS7 (156 aa).

Belongs to the universal ribosomal protein uS7 family. Part of the 30S ribosomal subunit. Contacts proteins S9 and S11.

Functionally, one of the primary rRNA binding proteins, it binds directly to 16S rRNA where it nucleates assembly of the head domain of the 30S subunit. Is located at the subunit interface close to the decoding center, probably blocks exit of the E-site tRNA. The sequence is that of Small ribosomal subunit protein uS7 from Janthinobacterium sp. (strain Marseille) (Minibacterium massiliensis).